The following is a 494-amino-acid chain: UPF0371 protein SPT_0390 (494 aa).

Belongs to the UPF0371 family.

In Streptococcus pneumoniae (strain Taiwan19F-14), this protein is UPF0371 protein SPT_0390.